The sequence spans 146 residues: Large ribosomal subunit protein uL15 (146 aa).

The interval 1-57 is disordered; the sequence is MKLFELQPAPGSKKLPKRKGRGHGTGNGKTAGRGHKGQNARSGGGVRPGFEGGQMPL. Residues 42-52 are compositionally biased toward gly residues; sequence SGGGVRPGFEG.

The protein belongs to the universal ribosomal protein uL15 family. In terms of assembly, part of the 50S ribosomal subunit.

In terms of biological role, binds to the 23S rRNA. This chain is Large ribosomal subunit protein uL15, found in Acetivibrio thermocellus (strain ATCC 27405 / DSM 1237 / JCM 9322 / NBRC 103400 / NCIMB 10682 / NRRL B-4536 / VPI 7372) (Clostridium thermocellum).